Here is a 326-residue protein sequence, read N- to C-terminus: Transmembrane protein PVRIG (326 aa).

Transmembrane regions (helical) follow at residues 26-46 (LVLPWVLLTLCVTAGTPEVWV), 62-78 (CGFLGSGSISLVTVSWG), and 172-192 (LAGILGVSGVLLFGCVYLLHL). Tyr-233 is subject to Phosphotyrosine. The disordered stretch occupies residues 296 to 326 (AGERPPHTGPGLTLFPDPRGPRAMEGPLGVR).

Interacts with NECTIN2, hence competing with CD226. As to expression, expressed in some types of immune cells. Expressed at low levels on the surface of freshly isolated T-cells and natural killer (NK) cells, predominantly on CD8+ T-cells (mainly memory/effector, but not naive cells) and on both CD16+ and CD16- NK cells. T-cell expression levels are variable among individuals. Not detected in B-cells, naive or helper T-cells, monocytes, nor neutrophils (at protein level). Not detected in dendritic cells.

It localises to the cell membrane. Cell surface receptor for NECTIN2. May act as a coinhibitory receptor that suppresses T-cell receptor-mediated signals. Following interaction with NECTIN2, inhibits T-cell proliferation. Competes with CD226 for NECTIN2-binding. The polypeptide is Transmembrane protein PVRIG (PVRIG) (Homo sapiens (Human)).